The following is a 146-amino-acid chain: Hemoglobin subunit beta (146 aa).

Val-1 carries the N-acetylvaline modification. The region spanning 2 to 146 is the Globin domain; the sequence is HLTAEEKSAV…VANALAHKYH (145 aa). The residue at position 12 (Thr-12) is a Phosphothreonine. At Ser-44 the chain carries Phosphoserine. At Lys-59 the chain carries N6-acetyllysine. His-63 contacts heme b. N6-acetyllysine is present on Lys-82. His-92 serves as a coordination point for heme b. Residue Cys-93 is modified to S-nitrosocysteine. Residue Lys-144 is modified to N6-acetyllysine.

Belongs to the globin family. Heterotetramer of two alpha chains and two beta chains. Red blood cells.

Functionally, involved in oxygen transport from the lung to the various peripheral tissues. This is Hemoglobin subunit beta (HBB) from Leptonychotes weddellii (Weddell seal).